A 318-amino-acid polypeptide reads, in one-letter code: MTRWVQTFLLLVAVIRSYAEDSCPDVKVIGVGASDKLTILRGCPGIPGVPGPQGPSGPAGAKGEKGFPGIPGKMGPTGLKGERGISGPKGQKGDKGDPGIPVVGMAQNCKEWLDQGASISGWYTIYTTNGLSLTVLCDMETDGGGWIVFQRRMDGSVDFFQDWISYKRGFGRQDSEFWLGNNNLHLLTVTGSFQLRVDLTDFGNNRTSASYSDFRIAAEAQNYTLSLGTFTGGDAGDSLYGHKNKGFSTKDRDNDSSPASCAERYRGAWWYTSCHSSNLNGLYLRGNHSSFANGVNWKSGRGYKYSYEVSEIKFRPQP.

The signal sequence occupies residues 1–19; the sequence is MTRWVQTFLLLVAVIRSYA. The 58-residue stretch at 42-99 folds into the Collagen-like domain; it reads GCPGIPGVPGPQGPSGPAGAKGEKGFPGIPGKMGPTGLKGERGISGPKGQKGDKGDPG. Residues 100-318 form the Fibrinogen C-terminal domain; sequence IPVVGMAQNC…VSEIKFRPQP (219 aa). The cysteines at positions 109 and 137 are disulfide-linked. N-linked (GlcNAc...) asparagine glycosylation is found at asparagine 205 and asparagine 222. Aspartate 253 contributes to the Ca(2+) binding site. N-linked (GlcNAc...) asparagine glycosylation is present at asparagine 254. Ca(2+) is bound by residues aspartate 255 and serine 257. A disulfide bridge links cysteine 261 with cysteine 274. 273–275 contacts a carbohydrate; that stretch reads SCH. Residue asparagine 287 is glycosylated (N-linked (GlcNAc...) asparagine).

The protein belongs to the ficolin lectin family. Homotrimer. May form higher-order oligomers. In terms of processing, N-glycosylated. Expressed in peripheral blood leukocytes. Also detected at lower levels in spleen and lung.

The protein resides in the secreted. In terms of biological role, may function in innate immunity through activation of the lectin complement pathway. Binds to GalNAc and GlcNAc carbohydrate moieties. This chain is Ficolin-1-B, found in Xenopus laevis (African clawed frog).